A 510-amino-acid polypeptide reads, in one-letter code: Histidine ammonia-lyase (510 aa).

A cross-link (5-imidazolinone (Ala-Gly)) is located at residues 143–145 (ASG). S144 carries the 2,3-didehydroalanine (Ser) modification.

This sequence belongs to the PAL/histidase family. Post-translationally, contains an active site 4-methylidene-imidazol-5-one (MIO), which is formed autocatalytically by cyclization and dehydration of residues Ala-Ser-Gly.

The protein localises to the cytoplasm. It catalyses the reaction L-histidine = trans-urocanate + NH4(+). Its pathway is amino-acid degradation; L-histidine degradation into L-glutamate; N-formimidoyl-L-glutamate from L-histidine: step 1/3. The sequence is that of Histidine ammonia-lyase from Shewanella woodyi (strain ATCC 51908 / MS32).